We begin with the raw amino-acid sequence, 489 residues long: N-succinylglutamate 5-semialdehyde dehydrogenase (489 aa).

Residue glycine 216–glycine 221 coordinates NAD(+). Active-site residues include glutamate 239 and cysteine 273.

Belongs to the aldehyde dehydrogenase family. AstD subfamily.

The enzyme catalyses N-succinyl-L-glutamate 5-semialdehyde + NAD(+) + H2O = N-succinyl-L-glutamate + NADH + 2 H(+). Its pathway is amino-acid degradation; L-arginine degradation via AST pathway; L-glutamate and succinate from L-arginine: step 4/5. Functionally, catalyzes the NAD-dependent reduction of succinylglutamate semialdehyde into succinylglutamate. This chain is N-succinylglutamate 5-semialdehyde dehydrogenase, found in Erwinia tasmaniensis (strain DSM 17950 / CFBP 7177 / CIP 109463 / NCPPB 4357 / Et1/99).